A 189-amino-acid polypeptide reads, in one-letter code: UPF0301 protein RrIowa_0061 (189 aa).

It belongs to the UPF0301 (AlgH) family.

The polypeptide is UPF0301 protein RrIowa_0061 (Rickettsia rickettsii (strain Iowa)).